The primary structure comprises 724 residues: Ribosomal RNA processing protein 1 homolog B (724 aa).

Positions 331–576 (NGAPLSSAED…SKKKKKTMKL (246 aa)) are disordered. 2 positions are modified to phosphoserine: S336 and S370. Residues 373-386 (HIHKKKRKKRKRSH) show a composition bias toward basic residues. Phosphoserine is present on residues S432 and S438. Basic residues predominate over residues 448–461 (HNKRKRPRKKKLRA). The span at 483-496 (SGHSQSSAAHISSS) shows a compositional bias: low complexity. The residue at position 494 (S494) is a Phosphoserine. Polar residues-rich tracts occupy residues 513–528 (DSSS…TPTS) and 548–564 (KTAS…SQKP). K618 is subject to N6-acetyllysine. A disordered region spans residues 625 to 649 (AKNSSATRPQGPAGQLNKTPSSSKK). Positions 640-649 (LNKTPSSSKK) are enriched in polar residues. 2 positions are modified to phosphoserine: S668 and S672. The residue at position 678 (R678) is a Citrulline. Positions 687-724 (PLHGVLKTATSSPASTPLSPMRLPATTPKRRPRAADFF) are disordered. T694 carries the phosphothreonine modification. Over residues 694 to 706 (TATSSPASTPLSP) the composition is skewed to low complexity. S698 and S701 each carry phosphoserine.

The protein belongs to the RRP1 family. In terms of assembly, interacts with the transcriptional activator E2F1. Interacts with serine/threonine-protein phosphatase PP1 subunits PPP1CB and PPP1CC but not with PPP1CA. Interacts with 60S ribosomal proteins RPL5 and RPL27, ribosomal processing protein RRP1/NNP1 and other nucleolar proteins including NOP2/NOL1 and FBL. Also interacts with nucleolar protein NPM1/B23. Interacts with splicing factor SRSF1 and LUC7L3/CROP. Interacts with GTPase activator SIPA1. Interacts with H1-10, NCL, PARP1, TRIM28 and YBX3. Post-translationally, citrullinated by PADI4.

It localises to the nucleus. The protein resides in the nucleolus. Its subcellular location is the nucleoplasm. It is found in the chromosome. Its function is as follows. Positively regulates DNA damage-induced apoptosis by acting as a transcriptional coactivator of proapoptotic target genes of the transcriptional activator E2F1. Likely to play a role in ribosome biogenesis by targeting serine/threonine protein phosphatase PP1 to the nucleolus. Involved in regulation of mRNA splicing. Inhibits SIPA1 GTPase activity. Involved in regulating expression of extracellular matrix genes. Associates with chromatin and may play a role in modulating chromatin structure. The polypeptide is Ribosomal RNA processing protein 1 homolog B (Rrp1b) (Mus musculus (Mouse)).